Here is a 287-residue protein sequence, read N- to C-terminus: Casein kinase II subunit beta-1 (287 aa).

A disordered region spans residues 1–97 (MYRDRGTVNS…ESDVSGSDGE (97 aa)). Residues 13 to 25 (EVVDRKRINDALE) show a composition bias toward basic and acidic residues. The span at 41 to 50 (GTVTAATTTA) shows a compositional bias: low complexity. A compositionally biased stretch (acidic residues) spans 78 to 97 (SDDESDTDSEESDVSGSDGE).

The protein belongs to the casein kinase 2 subunit beta family. Heterotetramer of two catalytic alpha subunits and two regulatory beta subunits. Interacts with CCA1. Interacts with LHY. In terms of processing, phosphorylated by alpha subunit.

It is found in the cytoplasm. The protein localises to the cytosol. The protein resides in the nucleus. Its function is as follows. Plays a complex role in regulating the basal catalytic activity of the alpha subunit. The tetrameric holoenzyme CK2, composed of two alpha and two beta subunits, phosphorylates the transcription factor GBFl, resulting in stimulation of its DNA binding activity. CK2 phosphorylates the transcription factor PIF1 after an exposure to light, resulting in a proteasome-dependent degradation of PIF1 and promotion of photomorphogenesis. CK2 phosphorylates translation initiation factors. May participate in the regulation of the initiation of translation. Stimulates the binding of CCA1 to promoters. This is Casein kinase II subunit beta-1 (CKB1) from Arabidopsis thaliana (Mouse-ear cress).